The chain runs to 445 residues: 3-phosphoshikimate 1-carboxyvinyltransferase (445 aa).

A disordered region spans residues Met-1–Pro-25. 3 residues coordinate 3-phosphoshikimate: Lys-28, Ser-29, and Arg-33. Lys-28 is a binding site for phosphoenolpyruvate. Positions 101 and 129 each coordinate phosphoenolpyruvate. Residues Ser-175, Gln-177, Asp-328, and Lys-355 each contribute to the 3-phosphoshikimate site. Residue Gln-177 participates in phosphoenolpyruvate binding. Asp-328 functions as the Proton acceptor in the catalytic mechanism. 2 residues coordinate phosphoenolpyruvate: Arg-359 and Arg-402.

The protein belongs to the EPSP synthase family. As to quaternary structure, monomer.

The protein localises to the cytoplasm. The enzyme catalyses 3-phosphoshikimate + phosphoenolpyruvate = 5-O-(1-carboxyvinyl)-3-phosphoshikimate + phosphate. It functions in the pathway metabolic intermediate biosynthesis; chorismate biosynthesis; chorismate from D-erythrose 4-phosphate and phosphoenolpyruvate: step 6/7. Functionally, catalyzes the transfer of the enolpyruvyl moiety of phosphoenolpyruvate (PEP) to the 5-hydroxyl of shikimate-3-phosphate (S3P) to produce enolpyruvyl shikimate-3-phosphate and inorganic phosphate. This is 3-phosphoshikimate 1-carboxyvinyltransferase from Rhodopseudomonas palustris (strain BisB5).